The following is a 445-amino-acid chain: MGSSANTETNGNAPPPSSNQKPPATNGVDGSHPPPPPLTPDQAIIESDPSKKRKMGMLPLEVGTRVMCRWRDGKHHPVKVIERRRIHNGGQNDYEYYVHYTEFNRRLDEWTQLDQLDLDSVECAVDEKVEDKVTSLKMTRHQKRKIDETHIEGHEELDAASLREHEEFTKVKNISTIELGKYEIETWYFSPFPPEYNDCVKLFFCEFCLNFMKRKEQLQRHMRKCDLKHPPGDEIYRSGTLSMFEVDGKKNKVYAQNLCYLAKLFLDHKTLYYDVDLFLFYVLCECDDRGCHMVGYFSKEKHSEEAYNLACILTLPSYQRKGYGKFLIAFSYELSKKEGKVGTPERPLSDLGLLSYRGYWTRVLLEILKKHKGNISIKELSDVTAIKAEDILSTLQSLELIQYRKGQHVICADPKVLDRHLKAAGRGGLDVDASKLIWTPYKDQS.

A compositionally biased stretch (polar residues) spans 1–23 (MGSSANTETNGNAPPPSSNQKPP). The disordered stretch occupies residues 1–58 (MGSSANTETNGNAPPPSSNQKPPATNGVDGSHPPPPPLTPDQAIIESDPSKKRKMGML). Residues 60 to 118 (LEVGTRVMCRWRDGKHHPVKVIERRRIHNGGQNDYEYYVHYTEFNRRLDEWTQLDQLDL) form the Tudor-knot domain. The MYST-type HAT domain occupies 169–440 (TKVKNISTIE…VDASKLIWTP (272 aa)). The C2HC MYST-type zinc finger occupies 202-227 (LFFCEFCLNFMKRKEQLQRHMRKCDL). N6-acetyllysine; by autocatalysis is present on Lys-269. Acetyl-CoA-binding positions include 312–314 (ILT) and 319–325 (QRKGYGK). Glu-345 acts as the Proton donor/acceptor in catalysis. Ser-349 contributes to the acetyl-CoA binding site.

Belongs to the MYST (SAS/MOZ) family. As to quaternary structure, interacts with MRG1 and MRG2. In terms of processing, autoacetylation at Lys-269 is required for proper function. Expressed in cotyledons, leaves, stems, roots and, at higher levels in developing flowers, particularly in the anthers and gynoecia. Constitutively expressed in all tissues, predominantly in shoot apical meristem.

It localises to the nucleus. The catalysed reaction is L-lysyl-[protein] + acetyl-CoA = N(6)-acetyl-L-lysyl-[protein] + CoA + H(+). Functionally, histone acetyltransferase which may be involved in transcriptional activation. Acetylates 'Lys-5' of histone H4 (H4K5ac). Essential for gametophyte development. Negative regulator of flowering controlling the H4K5ac levels in the FLC chromatin. This chain is Histone acetyltransferase of the MYST family 2, found in Arabidopsis thaliana (Mouse-ear cress).